The primary structure comprises 729 residues: Rho GTPase-activating protein 28 (729 aa).

2 disordered regions span residues Ala-20–Lys-42 and Ser-55–Thr-105. Positions Ser-65 to Ser-75 are enriched in polar residues. Phosphoserine is present on Ser-72. Residues Asp-80–Lys-89 are compositionally biased toward basic and acidic residues. At Thr-159 the chain carries Phosphothreonine. The disordered stretch occupies residues Gly-176–Val-236. A compositionally biased stretch (basic and acidic residues) spans Gly-195 to Arg-204. Positions Ser-217–Ala-226 are enriched in polar residues. In terms of domain architecture, Rho-GAP spans Val-380 to Trp-577. The interval Thr-612–Ser-631 is disordered. Residues Ser-619–Pro-630 are compositionally biased toward polar residues.

Expressed in testis. Expressed at moderate level in kidney and ovary, and weakly expressed in spleen and skeletal muscle.

Its function is as follows. GTPase activator for the Rho-type GTPases by converting them to an inactive GDP-bound state. In Homo sapiens (Human), this protein is Rho GTPase-activating protein 28 (ARHGAP28).